Consider the following 250-residue polypeptide: Pimeloyl-[acyl-carrier protein] methyl ester esterase (250 aa).

Residues Trp-12, 71 to 72 (SL), and 138 to 142 (FVALQ) contribute to the substrate site. Ser-71 (nucleophile) is an active-site residue. Residues Asp-202 and His-230 contribute to the active site. Substrate is bound at residue His-230.

It belongs to the AB hydrolase superfamily. Carboxylesterase BioH family. Monomer.

Its subcellular location is the cytoplasm. It carries out the reaction 6-carboxyhexanoyl-[ACP] methyl ester + H2O = 6-carboxyhexanoyl-[ACP] + methanol + H(+). The protein operates within cofactor biosynthesis; biotin biosynthesis. Its function is as follows. The physiological role of BioH is to remove the methyl group introduced by BioC when the pimeloyl moiety is complete. It allows to synthesize pimeloyl-ACP via the fatty acid synthetic pathway through the hydrolysis of the ester bonds of pimeloyl-ACP esters. The protein is Pimeloyl-[acyl-carrier protein] methyl ester esterase of Aromatoleum aromaticum (strain DSM 19018 / LMG 30748 / EbN1) (Azoarcus sp. (strain EbN1)).